We begin with the raw amino-acid sequence, 90 residues long: Small ribosomal subunit protein uS19 (90 aa).

This sequence belongs to the universal ribosomal protein uS19 family.

Its function is as follows. Protein S19 forms a complex with S13 that binds strongly to the 16S ribosomal RNA. This chain is Small ribosomal subunit protein uS19, found in Nitrosococcus oceani (strain ATCC 19707 / BCRC 17464 / JCM 30415 / NCIMB 11848 / C-107).